Consider the following 390-residue polypeptide: Chorismate synthase (390 aa).

NADP(+)-binding residues include Arg-48 and Arg-54. FMN is bound by residues 125–127 (RSS), 238–239 (NA), Gly-278, 293–297 (KPTSS), and Arg-319. Residues 360–390 (KVPGNIINPTNPVTTQPDVRRAEDPEPDENS) form a disordered region. The segment covering 366–376 (INPTNPVTTQP) has biased composition (polar residues).

It belongs to the chorismate synthase family. Homotetramer. The cofactor is FMNH2.

It carries out the reaction 5-O-(1-carboxyvinyl)-3-phosphoshikimate = chorismate + phosphate. Its pathway is metabolic intermediate biosynthesis; chorismate biosynthesis; chorismate from D-erythrose 4-phosphate and phosphoenolpyruvate: step 7/7. Catalyzes the anti-1,4-elimination of the C-3 phosphate and the C-6 proR hydrogen from 5-enolpyruvylshikimate-3-phosphate (EPSP) to yield chorismate, which is the branch point compound that serves as the starting substrate for the three terminal pathways of aromatic amino acid biosynthesis. This reaction introduces a second double bond into the aromatic ring system. The protein is Chorismate synthase of Nitrosomonas eutropha (strain DSM 101675 / C91 / Nm57).